Consider the following 451-residue polypeptide: Tubulin alpha-1 chain (451 aa).

Residue Gln-11 participates in GTP binding. An N6-acetyllysine modification is found at Lys-40. Residues Glu-71, Gly-144, Thr-145, Thr-179, Asn-206, and Asn-228 each coordinate GTP. Residue Glu-71 coordinates Mg(2+). Glu-254 is a catalytic residue.

Belongs to the tubulin family. In terms of assembly, dimer of alpha and beta chains. A typical microtubule is a hollow water-filled tube with an outer diameter of 25 nm and an inner diameter of 15 nM. Alpha-beta heterodimers associate head-to-tail to form protofilaments running lengthwise along the microtubule wall with the beta-tubulin subunit facing the microtubule plus end conferring a structural polarity. Microtubules usually have 13 protofilaments but different protofilament numbers can be found in some organisms and specialized cells. Mg(2+) is required as a cofactor. In terms of processing, undergoes a tyrosination/detyrosination cycle, the cyclic removal and re-addition of a C-terminal tyrosine residue by the enzymes tubulin tyrosine carboxypeptidase (TTCP) and tubulin tyrosine ligase (TTL), respectively. Post-translationally, acetylation of alpha chains at Lys-40 stabilizes microtubules and affects affinity and processivity of microtubule motors. This modification has a role in multiple cellular functions, ranging from cell motility, cell cycle progression or cell differentiation to intracellular trafficking and signaling.

Its subcellular location is the cytoplasm. The protein resides in the cytoskeleton. It catalyses the reaction GTP + H2O = GDP + phosphate + H(+). Tubulin is the major constituent of microtubules, a cylinder consisting of laterally associated linear protofilaments composed of alpha- and beta-tubulin heterodimers. Microtubules grow by the addition of GTP-tubulin dimers to the microtubule end, where a stabilizing cap forms. Below the cap, tubulin dimers are in GDP-bound state, owing to GTPase activity of alpha-tubulin. This Zea mays (Maize) protein is Tubulin alpha-1 chain (TUBA1).